The following is a 211-amino-acid chain: Dual specificity protein phosphatase 26 (211 aa).

Residues 60-207 enclose the Tyrosine-protein phosphatase domain; sequence NHADEVWPGL…LLALDRRLRQ (148 aa). C152 serves as the catalytic Phosphocysteine intermediate.

It belongs to the protein-tyrosine phosphatase family. Non-receptor class dual specificity subfamily. As to quaternary structure, interacts with HSF4.

The protein localises to the cytoplasm. The protein resides in the nucleus. Its subcellular location is the golgi apparatus. The enzyme catalyses O-phospho-L-tyrosyl-[protein] + H2O = L-tyrosyl-[protein] + phosphate. The catalysed reaction is O-phospho-L-seryl-[protein] + H2O = L-seryl-[protein] + phosphate. It carries out the reaction O-phospho-L-threonyl-[protein] + H2O = L-threonyl-[protein] + phosphate. Functionally, inactivates MAPK1 and MAPK3 which leads to dephosphorylation of heat shock factor protein 4 and a reduction in its DNA-binding activity. In Pongo abelii (Sumatran orangutan), this protein is Dual specificity protein phosphatase 26 (DUSP26).